The following is a 502-amino-acid chain: L-arabinose isomerase (502 aa).

Mn(2+) contacts are provided by Glu306, Glu333, His350, and His449.

Belongs to the arabinose isomerase family. Requires Mn(2+) as cofactor.

It carries out the reaction beta-L-arabinopyranose = L-ribulose. Its pathway is carbohydrate degradation; L-arabinose degradation via L-ribulose; D-xylulose 5-phosphate from L-arabinose (bacterial route): step 1/3. Catalyzes the conversion of L-arabinose to L-ribulose. The polypeptide is L-arabinose isomerase (Flavobacterium johnsoniae (strain ATCC 17061 / DSM 2064 / JCM 8514 / BCRC 14874 / CCUG 350202 / NBRC 14942 / NCIMB 11054 / UW101) (Cytophaga johnsonae)).